An 837-amino-acid chain; its full sequence is Protein translocase subunit SecA (837 aa).

ATP contacts are provided by residues glutamine 85, 103–107 (GEGKT), and aspartate 493. Positions 821, 823, 832, and 833 each coordinate Zn(2+).

It belongs to the SecA family. In terms of assembly, monomer and homodimer. Part of the essential Sec protein translocation apparatus which comprises SecA, SecYEG and auxiliary proteins SecDF. Other proteins may also be involved. Requires Zn(2+) as cofactor.

The protein localises to the cell membrane. Its subcellular location is the cytoplasm. It catalyses the reaction ATP + H2O + cellular proteinSide 1 = ADP + phosphate + cellular proteinSide 2.. Its function is as follows. Part of the Sec protein translocase complex. Interacts with the SecYEG preprotein conducting channel. Has a central role in coupling the hydrolysis of ATP to the transfer of proteins into and across the cell membrane, serving as an ATP-driven molecular motor driving the stepwise translocation of polypeptide chains across the membrane. This is Protein translocase subunit SecA from Streptococcus pneumoniae serotype 2 (strain D39 / NCTC 7466).